The following is a 171-amino-acid chain: Crossover junction endodeoxyribonuclease RuvC (171 aa).

Residues Asp-12, Glu-72, and Asp-144 contribute to the active site. Residues Asp-12, Glu-72, and Asp-144 each coordinate Mg(2+).

The protein belongs to the RuvC family. Homodimer which binds Holliday junction (HJ) DNA. The HJ becomes 2-fold symmetrical on binding to RuvC with unstacked arms; it has a different conformation from HJ DNA in complex with RuvA. In the full resolvosome a probable DNA-RuvA(4)-RuvB(12)-RuvC(2) complex forms which resolves the HJ. Mg(2+) serves as cofactor.

The protein resides in the cytoplasm. The enzyme catalyses Endonucleolytic cleavage at a junction such as a reciprocal single-stranded crossover between two homologous DNA duplexes (Holliday junction).. The RuvA-RuvB-RuvC complex processes Holliday junction (HJ) DNA during genetic recombination and DNA repair. Endonuclease that resolves HJ intermediates. Cleaves cruciform DNA by making single-stranded nicks across the HJ at symmetrical positions within the homologous arms, yielding a 5'-phosphate and a 3'-hydroxyl group; requires a central core of homology in the junction. The consensus cleavage sequence is 5'-(A/T)TT(C/G)-3'. Cleavage occurs on the 3'-side of the TT dinucleotide at the point of strand exchange. HJ branch migration catalyzed by RuvA-RuvB allows RuvC to scan DNA until it finds its consensus sequence, where it cleaves and resolves the cruciform DNA. The protein is Crossover junction endodeoxyribonuclease RuvC of Afipia carboxidovorans (strain ATCC 49405 / DSM 1227 / KCTC 32145 / OM5) (Oligotropha carboxidovorans).